The primary structure comprises 130 residues: L-ectoine synthase (130 aa).

The protein belongs to the ectoine synthase family.

It carries out the reaction (2S)-4-acetamido-2-aminobutanoate = L-ectoine + H2O. It participates in amine and polyamine biosynthesis; ectoine biosynthesis; L-ectoine from L-aspartate 4-semialdehyde: step 3/3. Catalyzes the circularization of gamma-N-acetyl-alpha,gamma-diaminobutyric acid (ADABA) to ectoine (1,4,5,6-tetrahydro-2-methyl-4-pyrimidine carboxylic acid), which is an excellent osmoprotectant. The polypeptide is L-ectoine synthase (Mycolicibacterium gilvum (strain PYR-GCK) (Mycobacterium gilvum (strain PYR-GCK))).